The following is a 281-amino-acid chain: MEKAIRDRVEKWKKEHTIDGKDATNEHAYESLNELILDGKKLTSIKNEEKELLKNFKNLERLCLNQTGIQTLENIPSIATLNVLELTDNHLSSVEVLKYIVQNFPNIKTLEIGGNHFKNINDFETLKELKNLVRLGVQFNPFADNPNYRKELFEFLPNVKIIDCYNKEGMEVLSSDEEEEEEYEEDNTLKNFYEADFKDEDDEDEEFVPNDNEDDDEDDELDDDLEDEDMEDLDKEDLDKEDYDIDTKETEGVNKDEKSNKRKQDALDNTNDMDLKKTKLE.

4 LRR repeats span residues 29-52, 56-78, 79-103, and 105-128; these read YESL…EKEL, FKNL…IPSI, ATLN…IVQN, and PNIK…TLKE. Residues 140–178 enclose the LRRCT domain; that stretch reads NPFADNPNYRKELFEFLPNVKIIDCYNKEGMEVLSSDEE. Over residues 197–244 the composition is skewed to acidic residues; it reads FKDEDDEDEEFVPNDNEDDDEDDELDDDLEDEDMEDLDKEDLDKEDYD. The tract at residues 197-281 is disordered; sequence FKDEDDEDEE…DMDLKKTKLE (85 aa). Residues 245–266 show a composition bias toward basic and acidic residues; it reads IDTKETEGVNKDEKSNKRKQDA.

The protein belongs to the ANP32 family.

In Plasmodium falciparum (isolate 3D7), this protein is Acidic leucine-rich nuclear phosphoprotein 32-related protein.